The primary structure comprises 145 residues: Large ribosomal subunit protein uL15 (145 aa).

Residues 1–57 (MKLNDLSPAPGSRREKHRPGRGIGSGLGKTGGRGHKGQTSRSGGTIAPGFEGGQQPL) form a disordered region. Residues 21–31 (RGIGSGLGKTG) are compositionally biased toward gly residues.

It belongs to the universal ribosomal protein uL15 family. As to quaternary structure, part of the 50S ribosomal subunit.

Its function is as follows. Binds to the 23S rRNA. The sequence is that of Large ribosomal subunit protein uL15 from Pseudomonas fluorescens (strain SBW25).